The sequence spans 212 residues: Ras-related protein Rab-43 (212 aa).

25-32 (GDASVGKT) serves as a coordination point for GTP. The Effector region signature appears at 47–55 (QGSTIGVDF). A Phosphoserine modification is found at S49. 73-77 (DTAGQ) serves as a coordination point for GTP. T82 is modified (phosphothreonine; by LRRK2). GTP contacts are provided by residues 131–134 (NKSD) and 163–164 (AK). S193 is subject to Phosphoserine. Residues C210 and C212 are each lipidated (S-geranylgeranyl cysteine). Residue C212 is modified to Cysteine methyl ester.

It belongs to the small GTPase superfamily. Rab family. In terms of assembly, interacts with GDI1, GDI2, CHM and CHML; phosphorylation at Thr-82 disrupts these interactions. Widely expressed in brain, testis, lung, heart, ovary, colon, kidney, uterus and spleen but not in liver.

The protein localises to the cytoplasmic vesicle. Its subcellular location is the phagosome. It is found in the phagosome membrane. It localises to the golgi apparatus. The protein resides in the trans-Golgi network membrane. The protein localises to the trans-Golgi network. In terms of biological role, the small GTPases Rab are key regulators of intracellular membrane trafficking, from the formation of transport vesicles to their fusion with membranes. Rabs cycle between an inactive GDP-bound form and an active GTP-bound form that is able to recruit to membranes different set of downstream effectors directly responsible for vesicle formation, movement, tethering and fusion. The low intrinsic GTPase activity of RAB43 is activated by USP6NL. Involved in retrograde transport from the endocytic pathway to the Golgi apparatus. Involved in the transport of Shiga toxin from early and recycling endosomes to the trans-Golgi network. Required for the structural integrity of the Golgi complex. Plays a role in the maturation of phagosomes that engulf pathogens, such as S.aureus and M.tuberculosis. This Homo sapiens (Human) protein is Ras-related protein Rab-43 (RAB43).